Here is a 152-residue protein sequence, read N- to C-terminus: Coiled-coil domain-containing protein 182 (152 aa).

A coiled-coil region spans residues 46 to 109 (ADLEILQQKV…RLREEEDRGI (64 aa)).

The sequence is that of Coiled-coil domain-containing protein 182 (Ccdc182) from Mus musculus (Mouse).